The primary structure comprises 213 residues: MIRVLVVDDHDLVRTGITRMLADIDGLQVVGQAESGEESLLKARELKPYVVLMDVKMPGIGGLEATRKLLRSHPDIKVVAVTVCEEDPFPTRLLQAGAAGYLTKGAGLNEMVQAIRLVFAGQRYISPQIAQQLVFKSFQPSSDSPFDALSEREIQIALMIVGCQKVQIISDKLCLSPKTVNTYRYRIFEKLSISSDVELTLLAVRHGMVDASL.

Residues 3-119 form the Response regulatory domain; the sequence is RVLVVDDHDL…EMVQAIRLVF (117 aa). Asp54 bears the 4-aspartylphosphate mark. The 66-residue stretch at 142–207 folds into the HTH luxR-type domain; the sequence is SDSPFDALSE…ELTLLAVRHG (66 aa). The segment at residues 166 to 185 is a DNA-binding region (H-T-H motif); sequence VQIISDKLCLSPKTVNTYRY.

In terms of processing, phosphorylated by GacS.

Its function is as follows. Member of the two-component regulatory system GacA/GacS which controls the expression of secondary metabolites and extracellular products. Acts (probably primarily) by activating expression of CsrA1 and CsrA2 antagonist small RNAs (sRNA) RsmX, RsmY and RsmZ which bind to and prevent translation repression by CsrA1 and CsrA2. Involved in the regulation of secondary metabolism and in the synthesis of the antifungal factors cyanide, 2,4-diacetylphloroglucinol and pyoluteorin. Involved in synthesis of the autoinducing signal (unrelated to N-acylhomoserine lactones, induces the Gac/Csr cascade). Exercises positive post-transcriptional control over the hcnABC and aprA genes; acts upstream of CsrA2 (rsmA). Controls expression of csrA1 (rsmE) and csrA2. In Pseudomonas protegens (strain DSM 19095 / LMG 27888 / CFBP 6595 / CHA0), this protein is Response regulator GacA.